Consider the following 924-residue polypeptide: Alpha-actinin, sarcomeric (924 aa).

An actin-binding region spans residues 1-250 (MMMENGLSME…IMTYVSCYYH (250 aa)). 2 consecutive Calponin-homology (CH) domains span residues 34–138 (KQQK…LRFA) and 147–253 (MTAK…HAFQ). Spectrin repeat units follow at residues 251–395 (AFQG…TVSD), 396–510 (ISNS…RCQR), 511–631 (ICDQ…TAND), and 632–744 (MTRK…TMET). 2 consecutive EF-hand domains span residues 778 to 813 (EQLN…LGYS) and 819 to 854 (QGDL…ESTD). Ca(2+)-binding residues include D791, N793, T795, R797, and E802.

Belongs to the alpha-actinin family. Homodimer; antiparallel. Interacts with Smn; the interaction occurs in adult thoracic tissues. Larval muscle isoform is expressed in the larval body wall, adult muscles of the head and abdomen and supercontractile muscles of the larva and adult. Adult muscle isoform accumulates within adult fibrillar and tubular muscles.

The protein localises to the cytoplasm. Its subcellular location is the myofibril. The protein resides in the sarcomere. It is found in the z line. F-actin cross-linking protein which is thought to anchor actin to a variety of intracellular structures. This is a bundling protein. The chain is Alpha-actinin, sarcomeric (Actn) from Drosophila melanogaster (Fruit fly).